The primary structure comprises 56 residues: Large ribosomal subunit protein bL33 (56 aa).

The span at 1–12 (MASKGGRDKIKL) shows a compositional bias: basic and acidic residues. The disordered stretch occupies residues 1–30 (MASKGGRDKIKLESTAGTGHFYTTTKNKRT). A compositionally biased stretch (polar residues) spans 15 to 25 (TAGTGHFYTTT).

Belongs to the bacterial ribosomal protein bL33 family.

The sequence is that of Large ribosomal subunit protein bL33 from Ralstonia nicotianae (strain ATCC BAA-1114 / GMI1000) (Ralstonia solanacearum).